A 161-amino-acid polypeptide reads, in one-letter code: Nascent polypeptide-associated complex subunit beta (161 aa).

Disordered regions lie at residues 14–41 (LSAN…KDDS) and 125–161 (QNAQ…ADVE). An NAC-A/B domain is found at 37 to 102 (NKDDSKLQAQ…PQEKSLQDLF (66 aa)). Residues 125-134 (QNAQAAAPAT) show a composition bias toward low complexity. Residues 135–146 (EGHEAGEKKDND) are compositionally biased toward basic and acidic residues.

The protein belongs to the NAC-beta family. In terms of assembly, part of the nascent polypeptide-associated complex (NAC), consisting of EGD2 and EGD1. NAC associates with ribosomes via EGD1.

It is found in the cytoplasm. Its subcellular location is the nucleus. Its function is as follows. Component of the nascent polypeptide-associated complex (NAC), a dynamic component of the ribosomal exit tunnel, protecting the emerging polypeptides from interaction with other cytoplasmic proteins to ensure appropriate nascent protein targeting. The NAC complex also promotes mitochondrial protein import by enhancing productive ribosome interactions with the outer mitochondrial membrane and blocks the inappropriate interaction of ribosomes translating non-secretory nascent polypeptides with translocation sites in the membrane of the endoplasmic reticulum. EGD1 may act as a transcription factor that exert a negative effect on the expression of several genes that are transcribed by RNA polymerase II. This is Nascent polypeptide-associated complex subunit beta (EGD1) from Eremothecium gossypii (strain ATCC 10895 / CBS 109.51 / FGSC 9923 / NRRL Y-1056) (Yeast).